The primary structure comprises 381 residues: Homoserine O-succinyltransferase (381 aa).

The AB hydrolase-1 domain occupies 45–360; it reads NAVLVCHALN…PHGHDAFLLD (316 aa). The active-site Nucleophile is the Ser151. Substrate is bound at residue Arg221. Residues Asp321 and His354 contribute to the active site. Residue Asp355 participates in substrate binding.

Belongs to the AB hydrolase superfamily. MetX family. As to quaternary structure, homodimer.

Its subcellular location is the cytoplasm. It carries out the reaction L-homoserine + succinyl-CoA = O-succinyl-L-homoserine + CoA. The protein operates within amino-acid biosynthesis; L-methionine biosynthesis via de novo pathway; O-succinyl-L-homoserine from L-homoserine: step 1/1. Transfers a succinyl group from succinyl-CoA to L-homoserine, forming succinyl-L-homoserine. The chain is Homoserine O-succinyltransferase from Burkholderia cenocepacia (strain HI2424).